The following is a 316-amino-acid chain: Erythritol catabolism regulatory protein EryD (316 aa).

Positions 23 to 42 (QSAVAKRLGLPSVKAHRLIA) form a DNA-binding region, H-T-H motif.

Belongs to the SorC transcriptional regulatory family.

Erythritol may act as an inducer, probably by binding to EryD and inhibiting its repressor activity. Its function is as follows. Represses the expression of the eryABCD operon, which is involved in erythritol catabolism. This Brucella abortus (strain 2308) protein is Erythritol catabolism regulatory protein EryD.